The chain runs to 325 residues: Elongation factor P--(R)-beta-lysine ligase (325 aa).

76–78 contributes to the substrate binding site; sequence SPE. ATP is bound by residues 100-102 and N109; that span reads RNE. Y118 provides a ligand contact to substrate. Residue 244–245 participates in ATP binding; that stretch reads EL. Residue E251 coordinates substrate. G300 provides a ligand contact to ATP.

It belongs to the class-II aminoacyl-tRNA synthetase family. EpmA subfamily. In terms of assembly, homodimer.

It carries out the reaction D-beta-lysine + L-lysyl-[protein] + ATP = N(6)-((3R)-3,6-diaminohexanoyl)-L-lysyl-[protein] + AMP + diphosphate + H(+). In terms of biological role, with EpmB is involved in the beta-lysylation step of the post-translational modification of translation elongation factor P (EF-P). Catalyzes the ATP-dependent activation of (R)-beta-lysine produced by EpmB, forming a lysyl-adenylate, from which the beta-lysyl moiety is then transferred to the epsilon-amino group of a conserved specific lysine residue in EF-P. In Proteus mirabilis (strain HI4320), this protein is Elongation factor P--(R)-beta-lysine ligase.